The chain runs to 58 residues: U7-ctenitoxin-Pr1a (58 aa).

Disulfide bonds link cysteine 2/cysteine 16, cysteine 9/cysteine 22, cysteine 13/cysteine 48, cysteine 15/cysteine 40, cysteine 18/cysteine 55, and cysteine 24/cysteine 38.

As to expression, expressed by the venom gland.

It is found in the secreted. Functionally, probable neurotoxin. The protein is U7-ctenitoxin-Pr1a of Phoneutria reidyi (Brazilian Amazonian armed spider).